The sequence spans 436 residues: UPF0597 protein YhaM (436 aa).

It belongs to the UPF0597 family.

The sequence is that of UPF0597 protein YhaM from Shigella sonnei (strain Ss046).